Consider the following 347-residue polypeptide: MPHTHKITPQEALQRTIEHREIFHDEMLHIMRLIMSGEMSPVMMAALITGLRVKKETIGEITAAAQVMREFSTKVHVADKTHLVDIVGTGGDGSHTFNISTCSMFVAAAAGAKVSKHGGRSVSSKSGSADVMEALGININLMPEAIAKCIEEAGVGFMFAPNHHPAMKNVAPIRKELGVRTIFNILGPLTNPASAPNILMGVFHPDLVGIQIRALQRLGAEHALVVYGKDGMDEVSLGAATIVGELKNGEITEYEIHPEDFSMTMASNRALRVETPEQSKAMLLGVLDNQPGAARDIVILNAGAALYAANVASSMQEGIVKARAALESGAAKARLAQLVSITQTLAA.

Residues glycine 88, 91-92, threonine 96, 98-101, 116-124, and serine 128 contribute to the 5-phospho-alpha-D-ribose 1-diphosphate site; these read GD, NIST, and KHGGRSVSS. Glycine 88 is an anthranilate binding site. Serine 100 contacts Mg(2+). Anthranilate is bound at residue arginine 174. Aspartate 233 and glutamate 234 together coordinate Mg(2+).

This sequence belongs to the anthranilate phosphoribosyltransferase family. As to quaternary structure, homodimer. Requires Mg(2+) as cofactor.

The enzyme catalyses N-(5-phospho-beta-D-ribosyl)anthranilate + diphosphate = 5-phospho-alpha-D-ribose 1-diphosphate + anthranilate. It participates in amino-acid biosynthesis; L-tryptophan biosynthesis; L-tryptophan from chorismate: step 2/5. Catalyzes the transfer of the phosphoribosyl group of 5-phosphorylribose-1-pyrophosphate (PRPP) to anthranilate to yield N-(5'-phosphoribosyl)-anthranilate (PRA). The polypeptide is Anthranilate phosphoribosyltransferase (Polaromonas sp. (strain JS666 / ATCC BAA-500)).